The primary structure comprises 276 residues: Formamidopyrimidine-DNA glycosylase (276 aa).

Residue Pro2 is the Schiff-base intermediate with DNA of the active site. Glu3 acts as the Proton donor in catalysis. Lys58 serves as the catalytic Proton donor; for beta-elimination activity. His92, Arg111, and Lys154 together coordinate DNA. Residues 239 to 273 form an FPG-type zinc finger; that stretch reads QVYGHVGEPCPVCGTKFEKIKVNGRGTTFCPHCQV. Catalysis depends on Arg263, which acts as the Proton donor; for delta-elimination activity.

This sequence belongs to the FPG family. In terms of assembly, monomer. Zn(2+) is required as a cofactor.

The enzyme catalyses Hydrolysis of DNA containing ring-opened 7-methylguanine residues, releasing 2,6-diamino-4-hydroxy-5-(N-methyl)formamidopyrimidine.. It catalyses the reaction 2'-deoxyribonucleotide-(2'-deoxyribose 5'-phosphate)-2'-deoxyribonucleotide-DNA = a 3'-end 2'-deoxyribonucleotide-(2,3-dehydro-2,3-deoxyribose 5'-phosphate)-DNA + a 5'-end 5'-phospho-2'-deoxyribonucleoside-DNA + H(+). In terms of biological role, involved in base excision repair of DNA damaged by oxidation or by mutagenic agents. Acts as a DNA glycosylase that recognizes and removes damaged bases. Has a preference for oxidized purines, such as 7,8-dihydro-8-oxoguanine (8-oxoG). Has AP (apurinic/apyrimidinic) lyase activity and introduces nicks in the DNA strand. Cleaves the DNA backbone by beta-delta elimination to generate a single-strand break at the site of the removed base with both 3'- and 5'-phosphates. This is Formamidopyrimidine-DNA glycosylase from Lactobacillus helveticus (strain DPC 4571).